Here is a 66-residue protein sequence, read N- to C-terminus: Photosystem II reaction center protein J (66 aa).

The helical transmembrane segment at 36–56 threads the bilayer; the sequence is LWLVATAGGIAVIFVLGIFFY.

It belongs to the PsbJ family. As to quaternary structure, PSII is composed of 1 copy each of membrane proteins PsbA, PsbB, PsbC, PsbD, PsbE, PsbF, PsbH, PsbI, PsbJ, PsbK, PsbL, PsbM, PsbT, PsbX, PsbY, Psb30/Ycf12, peripheral proteins PsbO, CyanoQ (PsbQ), PsbU, PsbV and a large number of cofactors. It forms dimeric complexes.

It localises to the cellular thylakoid membrane. Its function is as follows. One of the components of the core complex of photosystem II (PSII). PSII is a light-driven water:plastoquinone oxidoreductase that uses light energy to abstract electrons from H(2)O, generating O(2) and a proton gradient subsequently used for ATP formation. It consists of a core antenna complex that captures photons, and an electron transfer chain that converts photonic excitation into a charge separation. The protein is Photosystem II reaction center protein J of Prochlorococcus marinus (strain MIT 9215).